The sequence spans 446 residues: Maltoporin (446 aa).

The N-terminal stretch at 1–25 (MMITLRKLPLAVAVAAGVMSAQAMA) is a signal peptide.

It belongs to the porin LamB (TC 1.B.3) family. Homotrimer formed of three 18-stranded antiparallel beta-barrels, containing three independent channels.

Its subcellular location is the cell outer membrane. It carries out the reaction beta-maltose(in) = beta-maltose(out). Its function is as follows. Involved in the transport of maltose and maltodextrins. The chain is Maltoporin from Escherichia coli O8 (strain IAI1).